The following is a 229-amino-acid chain: NAD(P)H-quinone oxidoreductase subunit K, chloroplastic (229 aa).

[4Fe-4S] cluster-binding residues include Cys43, Cys44, Cys108, and Cys139.

The protein belongs to the complex I 20 kDa subunit family. As to quaternary structure, NDH is composed of at least 16 different subunits, 5 of which are encoded in the nucleus. Requires [4Fe-4S] cluster as cofactor.

Its subcellular location is the plastid. It is found in the chloroplast thylakoid membrane. It catalyses the reaction a plastoquinone + NADH + (n+1) H(+)(in) = a plastoquinol + NAD(+) + n H(+)(out). The enzyme catalyses a plastoquinone + NADPH + (n+1) H(+)(in) = a plastoquinol + NADP(+) + n H(+)(out). Functionally, NDH shuttles electrons from NAD(P)H:plastoquinone, via FMN and iron-sulfur (Fe-S) centers, to quinones in the photosynthetic chain and possibly in a chloroplast respiratory chain. The immediate electron acceptor for the enzyme in this species is believed to be plastoquinone. Couples the redox reaction to proton translocation, and thus conserves the redox energy in a proton gradient. The polypeptide is NAD(P)H-quinone oxidoreductase subunit K, chloroplastic (Aethionema grandiflorum (Persian stone-cress)).